A 360-amino-acid polypeptide reads, in one-letter code: UDP-N-acetylglucosamine--N-acetylmuramyl-(pentapeptide) pyrophosphoryl-undecaprenol N-acetylglucosamine transferase (360 aa).

UDP-N-acetyl-alpha-D-glucosamine is bound by residues 16–18 (TGG), Asn-128, Arg-165, Ser-191, Ile-247, 266–271 (ALTVSE), and Gln-292.

This sequence belongs to the glycosyltransferase 28 family. MurG subfamily.

Its subcellular location is the cell inner membrane. It catalyses the reaction di-trans,octa-cis-undecaprenyl diphospho-N-acetyl-alpha-D-muramoyl-L-alanyl-D-glutamyl-meso-2,6-diaminopimeloyl-D-alanyl-D-alanine + UDP-N-acetyl-alpha-D-glucosamine = di-trans,octa-cis-undecaprenyl diphospho-[N-acetyl-alpha-D-glucosaminyl-(1-&gt;4)]-N-acetyl-alpha-D-muramoyl-L-alanyl-D-glutamyl-meso-2,6-diaminopimeloyl-D-alanyl-D-alanine + UDP + H(+). Its pathway is cell wall biogenesis; peptidoglycan biosynthesis. Functionally, cell wall formation. Catalyzes the transfer of a GlcNAc subunit on undecaprenyl-pyrophosphoryl-MurNAc-pentapeptide (lipid intermediate I) to form undecaprenyl-pyrophosphoryl-MurNAc-(pentapeptide)GlcNAc (lipid intermediate II). In Shewanella amazonensis (strain ATCC BAA-1098 / SB2B), this protein is UDP-N-acetylglucosamine--N-acetylmuramyl-(pentapeptide) pyrophosphoryl-undecaprenol N-acetylglucosamine transferase.